A 448-amino-acid chain; its full sequence is MTATPAPRGPAPGAAPKISFVSLGCPKALVDSERILTHLRAEGYELARRHDGADVVIVNTCGFLDSAKAESLSAIGEAMAENGRVIVTGCMGAQPEEIREKYPDLLAVTGPQAYESVVAAVHEAVPPAHDPFLDLVPPQGIKLTPRHYAYLKISEGCSNRCSFCIIPSLRGNLVSRPAADVLREAEKLVKAGVKELLVVSQDTSAYGVDIRYSESPWRDRQVRAKFYDLTRELGELGAWVRLHYVYPYPHVDEVIPLMAEGKVLPYLDMPLQHASPSVLKRMRRPGNQERQLDRIRSWRQTCPDLAIRSTFIVGFPGETEAEFEELLAWLQEAKLDRVGCFEYEPVAGATANALGDPVPPAVKAERKRRFMETQNGIALRLQRAKVGKRLPVIVDSVEGGVARGRSKADAPEIDGTVHAAFRRPVRVGDIVTVKIDRAEAYDLYGSVA.

Positions 16-126 constitute an MTTase N-terminal domain; the sequence is PKISFVSLGC…VVAAVHEAVP (111 aa). Residues Cys-25, Cys-61, Cys-90, Cys-157, Cys-161, and Cys-164 each contribute to the [4Fe-4S] cluster site. The 238-residue stretch at 143–380 folds into the Radical SAM core domain; it reads LTPRHYAYLK…METQNGIALR (238 aa). A TRAM domain is found at 383 to 448; the sequence is RAKVGKRLPV…EAYDLYGSVA (66 aa).

This sequence belongs to the methylthiotransferase family. RimO subfamily. It depends on [4Fe-4S] cluster as a cofactor.

The protein localises to the cytoplasm. It carries out the reaction L-aspartate(89)-[ribosomal protein uS12]-hydrogen + (sulfur carrier)-SH + AH2 + 2 S-adenosyl-L-methionine = 3-methylsulfanyl-L-aspartate(89)-[ribosomal protein uS12]-hydrogen + (sulfur carrier)-H + 5'-deoxyadenosine + L-methionine + A + S-adenosyl-L-homocysteine + 2 H(+). In terms of biological role, catalyzes the methylthiolation of an aspartic acid residue of ribosomal protein uS12. This Methylobacterium radiotolerans (strain ATCC 27329 / DSM 1819 / JCM 2831 / NBRC 15690 / NCIMB 10815 / 0-1) protein is Ribosomal protein uS12 methylthiotransferase RimO.